Consider the following 141-residue polypeptide: Lutropin subunit beta (141 aa).

The N-terminal stretch at 1–20 (MERLQGLLLWLLLSPSVVWA) is a signal peptide. 5 cysteine pairs are disulfide-bonded: cysteine 29/cysteine 77, cysteine 43/cysteine 92, cysteine 54/cysteine 108, cysteine 58/cysteine 110, and cysteine 113/cysteine 120. An N-linked (GlcNAc...) asparagine glycan is attached at asparagine 33.

The protein belongs to the glycoprotein hormones subunit beta family. As to quaternary structure, heterodimer of a common alpha chain and a unique beta chain which confers biological specificity to thyrotropin, lutropin, follitropin and gonadotropin.

The protein localises to the secreted. In terms of biological role, promotes spermatogenesis and ovulation by stimulating the testes and ovaries to synthesize steroids. This chain is Lutropin subunit beta (Lhb), found in Mus musculus (Mouse).